A 630-amino-acid chain; its full sequence is Zinc finger protein 37 homolog (630 aa).

Disordered regions lie at residues Met1 to Glu45, Lys77 to Lys172, and His193 to Lys285. The span at Glu14 to Arg30 shows a compositional bias: basic and acidic residues. The KRAB domain occupies Leu32–Pro103. The residue at position 42 (Ser42) is a Phosphoserine. The span at Lys110–Asp122 shows a compositional bias: basic and acidic residues. The span at Asn161–Lys172 shows a compositional bias: basic residues. The span at His193–Lys206 shows a compositional bias: basic and acidic residues. Residues Lys221–Glu231 are compositionally biased toward basic residues. Composition is skewed to basic and acidic residues over residues Lys232–Asn243 and Ile260–Ser274. C2H2-type zinc fingers lie at residues Tyr293–His315 and Tyr321–His343. The C2H2-type 3; atypical zinc finger occupies Tyr349–His367. 9 C2H2-type zinc fingers span residues Tyr377 to His399, Tyr405 to His427, Tyr433 to His455, Phe461 to His483, Tyr489 to His511, Phe517 to His539, Tyr545 to His567, Tyr573 to His595, and Tyr601 to His623.

The protein belongs to the krueppel C2H2-type zinc-finger protein family. In terms of tissue distribution, expressed at low level in several tissues including fetal cartilage.

The protein localises to the nucleus. May be involved in transcriptional regulation. The polypeptide is Zinc finger protein 37 homolog (ZFP37) (Homo sapiens (Human)).